The primary structure comprises 362 residues: C-C chemokine receptor type 10 (362 aa).

Over 1–52 (MGTEATEQVSWGHYSGDEEDAYSAEPLPELCYKADVQAFSRAFQPSVSLTVA) the chain is Extracellular. The chain crosses the membrane as a helical span at residues 53–68 (ALGLAGNGLVLATHLA). Residues 69-78 (ARRAARSPTS) are Cytoplasmic-facing. Residues 79 to 99 (AHLLQLALADLLLALTLPFAA) traverse the membrane as a helical segment. Residues 100 to 114 (AGALQGWSLGSATCR) are Extracellular-facing. A disulfide bridge links Cys-113 with Cys-191. A helical transmembrane segment spans residues 115–136 (TISGLYSASFHAGFLFLACISA). The Cytoplasmic segment spans residues 137 to 159 (DRYVAIARALPAGPRPSTPGRAH). The chain crosses the membrane as a helical span at residues 160–179 (LVSVIVWLLSLLLALPALLF). Residues 180 to 203 (SQDGQREGQRRCRLIFPEGLTQTV) are Extracellular-facing. A helical membrane pass occupies residues 204–225 (KGASAVAQVALGFALPLGVMVA). The Cytoplasmic segment spans residues 226 to 247 (CYALLGRTLLAARGPERRRALR). Residues 248 to 269 (VVVALVAAFVVLQLPYSLALLL) traverse the membrane as a helical segment. At 270–290 (DTADLLAARERSCPASKRKDV) the chain is on the extracellular side. Residues 291–313 (ALLVTSGLALARCGLNPVLYAFL) traverse the membrane as a helical segment. At 314–362 (GLRFRQDLRRLLRGGSCPSGPQPRRGCPRRPRLSSCSAPTETHSLSWDN) the chain is on the cytoplasmic side. Residues 328 to 338 (GSCPSGPQPRR) show a composition bias toward low complexity. The tract at residues 328–362 (GSCPSGPQPRRGCPRRPRLSSCSAPTETHSLSWDN) is disordered. The span at 351 to 362 (APTETHSLSWDN) shows a compositional bias: polar residues.

It belongs to the G-protein coupled receptor 1 family. As to expression, expressed at high levels in adult testis, small intestine, fetal lung, fetal kidney. Weaker expression was observed in many other adult tissues including spleen, thymus, lymph node, Peyer patches, colon, heart, ovary, peripheral blood lymphocytes, thyroid and spinal cord. Also expressed by melanocytes, dermal fibroblasts, dermal microvascular endothelial cells. Also detected in T-cells and in skin-derived Langerhans cells.

It is found in the cell membrane. Functionally, receptor for chemokines SCYA27 and SCYA28. Subsequently transduces a signal by increasing the intracellular calcium ions level and stimulates chemotaxis in a pre-B cell line. The protein is C-C chemokine receptor type 10 (CCR10) of Homo sapiens (Human).